The chain runs to 210 residues: Thiamine-phosphate synthase 2 (210 aa).

Residues glutamine 38–lysine 42 and aspartate 70 contribute to the 4-amino-2-methyl-5-(diphosphooxymethyl)pyrimidine site. Mg(2+)-binding residues include aspartate 71 and glutamate 90. Threonine 109 contacts 4-amino-2-methyl-5-(diphosphooxymethyl)pyrimidine. Threonine 135–threonine 137 serves as a coordination point for 2-[(2R,5Z)-2-carboxy-4-methylthiazol-5(2H)-ylidene]ethyl phosphate. 4-amino-2-methyl-5-(diphosphooxymethyl)pyrimidine is bound at residue lysine 138. Glycine 165 is a 2-[(2R,5Z)-2-carboxy-4-methylthiazol-5(2H)-ylidene]ethyl phosphate binding site.

Belongs to the thiamine-phosphate synthase family. It depends on Mg(2+) as a cofactor.

The enzyme catalyses 2-[(2R,5Z)-2-carboxy-4-methylthiazol-5(2H)-ylidene]ethyl phosphate + 4-amino-2-methyl-5-(diphosphooxymethyl)pyrimidine + 2 H(+) = thiamine phosphate + CO2 + diphosphate. It catalyses the reaction 2-(2-carboxy-4-methylthiazol-5-yl)ethyl phosphate + 4-amino-2-methyl-5-(diphosphooxymethyl)pyrimidine + 2 H(+) = thiamine phosphate + CO2 + diphosphate. The catalysed reaction is 4-methyl-5-(2-phosphooxyethyl)-thiazole + 4-amino-2-methyl-5-(diphosphooxymethyl)pyrimidine + H(+) = thiamine phosphate + diphosphate. The protein operates within cofactor biosynthesis; thiamine diphosphate biosynthesis; thiamine phosphate from 4-amino-2-methyl-5-diphosphomethylpyrimidine and 4-methyl-5-(2-phosphoethyl)-thiazole: step 1/1. Functionally, condenses 4-methyl-5-(beta-hydroxyethyl)thiazole monophosphate (THZ-P) and 2-methyl-4-amino-5-hydroxymethyl pyrimidine pyrophosphate (HMP-PP) to form thiamine monophosphate (TMP). The sequence is that of Thiamine-phosphate synthase 2 from Streptococcus pneumoniae serotype 4 (strain ATCC BAA-334 / TIGR4).